Here is a 610-residue protein sequence, read N- to C-terminus: UvrABC system protein C (610 aa).

The region spanning 13–91 (HLPGVYRMYD…IKENQPKYNV (79 aa)) is the GIY-YIG domain. Residues 201–236 (GQVVEHLVQKMENAAQELDFEAAARFRDQIQSVRAV) form the UVR domain.

Belongs to the UvrC family. Interacts with UvrB in an incision complex.

The protein resides in the cytoplasm. In terms of biological role, the UvrABC repair system catalyzes the recognition and processing of DNA lesions. UvrC both incises the 5' and 3' sides of the lesion. The N-terminal half is responsible for the 3' incision and the C-terminal half is responsible for the 5' incision. This chain is UvrABC system protein C, found in Actinobacillus pleuropneumoniae serotype 7 (strain AP76).